The primary structure comprises 418 residues: Mitochondrial distribution and morphology protein 10 (418 aa).

This sequence belongs to the MDM10 family. As to quaternary structure, component of the ER-mitochondria encounter structure (ERMES) or MDM complex, composed of MMM1, MDM10, MDM12 and MDM34. Associates with the mitochondrial outer membrane sorting assembly machinery SAM(core) complex.

The protein localises to the mitochondrion outer membrane. In terms of biological role, component of the ERMES/MDM complex, which serves as a molecular tether to connect the endoplasmic reticulum and mitochondria. Components of this complex are involved in the control of mitochondrial shape and protein biogenesis and may function in phospholipid exchange. MDM10 is involved in the late assembly steps of the general translocase of the mitochondrial outer membrane (TOM complex). Functions in the TOM40-specific route of the assembly of outer membrane beta-barrel proteins, including the association of TOM40 with the receptor TOM22 and small TOM proteins. Can associate with the SAM(core) complex as well as the MDM12-MMM1 complex, both involved in late steps of the major beta-barrel assembly pathway, that is responsible for biogenesis of all outer membrane beta-barrel proteins. May act as a switch that shuttles between both complexes and channels precursor proteins into the TOM40-specific pathway. Plays a role in mitochondrial morphology and in the inheritance of mitochondria. In Meyerozyma guilliermondii (strain ATCC 6260 / CBS 566 / DSM 6381 / JCM 1539 / NBRC 10279 / NRRL Y-324) (Yeast), this protein is Mitochondrial distribution and morphology protein 10.